The following is a 269-amino-acid chain: Tropinone reductase homolog At2g29320 (269 aa).

19 to 43 (LVTGAASGIGYAIVEELAGFGAKIH) lines the NADP(+) pocket. Position 152 (Ser-152) interacts with substrate. Catalysis depends on Tyr-166, which acts as the Proton acceptor.

Belongs to the short-chain dehydrogenases/reductases (SDR) family. SDR65C subfamily.

The protein is Tropinone reductase homolog At2g29320 of Arabidopsis thaliana (Mouse-ear cress).